We begin with the raw amino-acid sequence, 329 residues long: Aspartate--ammonia ligase (329 aa).

Belongs to the class-II aminoacyl-tRNA synthetase family. AsnA subfamily.

It localises to the cytoplasm. The enzyme catalyses L-aspartate + NH4(+) + ATP = L-asparagine + AMP + diphosphate + H(+). It participates in amino-acid biosynthesis; L-asparagine biosynthesis; L-asparagine from L-aspartate (ammonia route): step 1/1. In Ureaplasma parvum serovar 3 (strain ATCC 27815 / 27 / NCTC 11736), this protein is Aspartate--ammonia ligase.